Reading from the N-terminus, the 157-residue chain is Pyruvoyl-dependent arginine decarboxylase 1 (157 aa).

A Pyruvic acid (Ser) modification is found at S41.

This sequence belongs to the PdaD family. Pyruvate is required as a cofactor.

It catalyses the reaction L-arginine + H(+) = agmatine + CO2. The protein is Pyruvoyl-dependent arginine decarboxylase 1 (pdaD1) of Archaeoglobus fulgidus (strain ATCC 49558 / DSM 4304 / JCM 9628 / NBRC 100126 / VC-16).